We begin with the raw amino-acid sequence, 341 residues long: Allergen Mag (341 aa).

This chain is Allergen Mag (MAG), found in Dermatophagoides farinae (American house dust mite).